The primary structure comprises 147 residues: Large ribosomal subunit protein uL13 (147 aa).

The protein belongs to the universal ribosomal protein uL13 family. In terms of assembly, part of the 50S ribosomal subunit.

In terms of biological role, this protein is one of the early assembly proteins of the 50S ribosomal subunit, although it is not seen to bind rRNA by itself. It is important during the early stages of 50S assembly. The chain is Large ribosomal subunit protein uL13 from Mycolicibacterium gilvum (strain PYR-GCK) (Mycobacterium gilvum (strain PYR-GCK)).